We begin with the raw amino-acid sequence, 293 residues long: 4-hydroxy-tetrahydrodipicolinate synthase (293 aa).

T44 contributes to the pyruvate binding site. The active-site Proton donor/acceptor is the Y132. K160 serves as the catalytic Schiff-base intermediate with substrate. Residue I202 coordinates pyruvate.

The protein belongs to the DapA family. As to quaternary structure, homotetramer; dimer of dimers.

The protein resides in the cytoplasm. The enzyme catalyses L-aspartate 4-semialdehyde + pyruvate = (2S,4S)-4-hydroxy-2,3,4,5-tetrahydrodipicolinate + H2O + H(+). The protein operates within amino-acid biosynthesis; L-lysine biosynthesis via DAP pathway; (S)-tetrahydrodipicolinate from L-aspartate: step 3/4. Its function is as follows. Catalyzes the condensation of (S)-aspartate-beta-semialdehyde [(S)-ASA] and pyruvate to 4-hydroxy-tetrahydrodipicolinate (HTPA). This is 4-hydroxy-tetrahydrodipicolinate synthase from Pelagibacter ubique (strain HTCC1062).